Consider the following 173-residue polypeptide: Zinc finger A20 and AN1 domain-containing stress-associated protein 2 (173 aa).

The A20-type zinc finger occupies 12–46; sequence PEGPKLCTNNCGFFGSAATMNMCSKCHKDMLFQQE. Zn(2+) contacts are provided by Cys18, Cys22, Cys34, Cys37, Cys114, Cys117, Cys128, Cys130, Cys135, His138, His144, and Cys146. The AN1-type zinc-finger motif lies at 108-154; the sequence is PKGPSRCTTCNKRVGLTGFKCRCGSLFCGTHRYADVHDCSFNYHAAA.

May be involved in environmental stress response. The sequence is that of Zinc finger A20 and AN1 domain-containing stress-associated protein 2 (SAP2) from Arabidopsis thaliana (Mouse-ear cress).